A 522-amino-acid chain; its full sequence is Maturase K (522 aa).

This sequence belongs to the intron maturase 2 family. MatK subfamily.

The protein resides in the plastid. The protein localises to the chloroplast. Usually encoded in the trnK tRNA gene intron. Probably assists in splicing its own and other chloroplast group II introns. The chain is Maturase K from Watsonia angusta.